The primary structure comprises 114 residues: MKKRNISIKSKVEIQELFKKGRFIRIEGINIFYEFTSLSISRMIVTFPKVFKGAVKRNRVRRIFKECFRKQLALLKNRYVDFIFVVYPQRVDVNYCEVDTMLKNIIVHVMKRKV.

Belongs to the RnpA family. Consists of a catalytic RNA component (M1 or rnpB) and a protein subunit.

The enzyme catalyses Endonucleolytic cleavage of RNA, removing 5'-extranucleotides from tRNA precursor.. Its function is as follows. RNaseP catalyzes the removal of the 5'-leader sequence from pre-tRNA to produce the mature 5'-terminus. It can also cleave other RNA substrates such as 4.5S RNA. The protein component plays an auxiliary but essential role in vivo by binding to the 5'-leader sequence and broadening the substrate specificity of the ribozyme. The sequence is that of Ribonuclease P protein component from Borrelia turicatae (strain 91E135).